Reading from the N-terminus, the 322-residue chain is uncharacterized protein (322 aa).

9 helical membrane passes run 5–25, 37–57, 71–91, 109–129, 153–173, 189–209, 245–265, 268–288, and 300–320; these read LISI…IPGI, IGPS…FKET, LPLL…LTSF, MMYV…MPFI, SFKM…LPFV, LFSL…VIMI, LLLI…APDI, PITI…ATFV, and IYPI…FALL.

The protein localises to the cell membrane. This is an uncharacterized protein from Methanocaldococcus jannaschii (strain ATCC 43067 / DSM 2661 / JAL-1 / JCM 10045 / NBRC 100440) (Methanococcus jannaschii).